Consider the following 878-residue polypeptide: Phosphoenolpyruvate carboxylase (878 aa).

Catalysis depends on residues His-138 and Lys-544.

This sequence belongs to the PEPCase type 1 family. Mg(2+) is required as a cofactor.

The catalysed reaction is oxaloacetate + phosphate = phosphoenolpyruvate + hydrogencarbonate. Its function is as follows. Forms oxaloacetate, a four-carbon dicarboxylic acid source for the tricarboxylic acid cycle. The protein is Phosphoenolpyruvate carboxylase of Psychromonas ingrahamii (strain DSM 17664 / CCUG 51855 / 37).